The primary structure comprises 739 residues: Vascular cell adhesion protein 1 (739 aa).

A signal peptide spans 1-24; sequence MPRKMVVIFGASNILWMVFAVSQA. 7 consecutive Ig-like C2-type domains span residues 25 to 105, 109 to 212, 223 to 309, 312 to 399, 408 to 506, 511 to 595, and 600 to 684; these read SKME…KKLE, QVEI…KERE, PRNT…LIVQ, PFTV…IKVD, EVEM…QTLY, PRDT…VELI, and PKDI…LTLD. Residues 25 to 698 lie on the Extracellular side of the membrane; sequence SKMEIFLEPR…ENNKDYFSPE (674 aa). 5 disulfide bridges follow: cysteine 47-cysteine 95, cysteine 52-cysteine 99, cysteine 137-cysteine 195, cysteine 246-cysteine 291, and cysteine 335-cysteine 383. Asparagine 76 and asparagine 77 each carry an N-linked (GlcNAc...) asparagine glycan. N-linked (GlcNAc...) asparagine glycosylation is present at asparagine 273. Asparagine 531 is a glycosylation site (N-linked (GlcNAc...) asparagine). The cysteines at positions 534 and 579 are disulfide-linked. The helical transmembrane segment at 699 to 720 threads the bilayer; sequence LLVLYCASSLIIPAIGMIIYFA. The Cytoplasmic segment spans residues 721–739; that stretch reads RRANMKGSYSLVEAQKSKV.

In terms of processing, cleaved by the metalloproteinase ADAM17 to generate the soluble form. Sialoglycoprotein. Post-translationally, ubiquitinated by TRIM65 via 'Lys-48'-linked ubiquitination; leading to proteasomal degradation.

Its subcellular location is the cell membrane. It localises to the secreted. Cell adhesion glycoprotein predominantly expressed on the surface of endothelial cells that plays an important role in immune surveillance and inflammation. Acts as a major regulator of leukocyte adhesion to the endothelium through interaction with different types of integrins. During inflammatory responses, binds ligands on the surface of activated endothelial cells to initiate the activation of calcium channels and the plasma membrane-associated small GTPase RAC1 leading to leukocyte transendothelial migration. Also serves as a quality-control checkpoint for entry into bone marrow by providing a 'don't-eat-me' stamping in the context of major histocompatibility complex (MHC) class-I presentation. The sequence is that of Vascular cell adhesion protein 1 (VCAM1) from Canis lupus familiaris (Dog).